A 285-amino-acid polypeptide reads, in one-letter code: Dihydropteroate synthase (285 aa).

In terms of domain architecture, Pterin-binding spans 18–276; the sequence is PKIMGIVNLT…DVKATADALK (259 aa). Asparagine 25 contacts Mg(2+). Residues threonine 66, aspartate 99, asparagine 119, aspartate 190, lysine 229, and 264–266 each bind (7,8-dihydropterin-6-yl)methyl diphosphate; that span reads RVH.

The protein belongs to the DHPS family. In terms of assembly, homodimer. Requires Mg(2+) as cofactor.

It catalyses the reaction (7,8-dihydropterin-6-yl)methyl diphosphate + 4-aminobenzoate = 7,8-dihydropteroate + diphosphate. It participates in cofactor biosynthesis; tetrahydrofolate biosynthesis; 7,8-dihydrofolate from 2-amino-4-hydroxy-6-hydroxymethyl-7,8-dihydropteridine diphosphate and 4-aminobenzoate: step 1/2. Catalyzes the condensation of para-aminobenzoate (pABA) with 6-hydroxymethyl-7,8-dihydropterin diphosphate (DHPt-PP) to form 7,8-dihydropteroate (H2Pte), the immediate precursor of folate derivatives. This Neisseria meningitidis serogroup B (strain ATCC BAA-335 / MC58) protein is Dihydropteroate synthase (folP).